Consider the following 506-residue polypeptide: UDP-glycosyltransferase eriJ (506 aa).

It belongs to the UDP-glycosyltransferase family.

It catalyses the reaction 11-O-acetylcyathatriol + UDP-alpha-D-xylose = erinacine Q + UDP + H(+). The enzyme catalyses 11-O-acetylcyathatriol + UDP-alpha-D-glucose = erinacine Q2 + UDP + H(+). It participates in secondary metabolite biosynthesis. UDP-glycosyltransferase; part of the gene cluster that mediates the biosynthesis of erinacines, cyathane-xylosides that show unique biological activities, including leishmanicidal activity, stimulating activity for nerve growth-factor synthesis, and agonistic activity toward the kappa opioid receptor. Within the pathway, eriJ tranfers xylose from UDP-xylose onto C-14 of 11-O-acetyl-cyathatriol to form eracine Q, and, at a lower rate, glucose from UDP-D-glucose to produce eracine Q2. The first step of the erinacines biosynthesis pathway is catalyzed by the geranylgeranyl diphosphate (GGPP) synthase eriE via conversion of farnesyl pyrophosphate and isopentyl pyrophosphate into geranylgeranyl pyrophosphate (GGPP). GGPP is then substrate of the diterpene cyclase eriG for the production of cyatha-3,12-diene. The cytochrome P450 monooxygenase eriI then hydroxylates cyatha-3,12-diene at C-14 of the seven-membered ring to produce erinacol, which is further hydroxylated at C-15 by the cytochrome P450 monooxygenase eriC to yield cyathadiol. The cytochrome P450 monooxygenase eriA then catalyzes C-11 hydroxylation in the presence of the short chain dehydrogenase/reductase (SDR) eriH, which leads to the production of cyathatriol. The acetyltransferase eriL converts cyathatriol into 11-O-acetyl-cyathatriol. The SDR eriH catalyzes further oxidation of 11-O-acetyl-cyathatriol into 1-O-acetylcyathin A3. Finally, the glycosyl transferase eriJ tranfers xylose from UDP-xylose onto C-14 of 11-O-acetyl-cyathatriol to form eracine Q. EriJ is also able to convert 11-O-acetyl-cyathatriol to eracine Q2 by using UDP-D-glucose as cosubstrate, but at a lower rate. This Hericium erinaceus (Lion's mane mushroom) protein is UDP-glycosyltransferase eriJ.